A 325-amino-acid chain; its full sequence is Ribonuclease Z (325 aa).

Zn(2+)-binding residues include His-63, His-65, Asp-67, His-68, His-147, Asp-218, and His-276. Asp-67 serves as the catalytic Proton acceptor.

It belongs to the RNase Z family. In terms of assembly, homodimer. Zn(2+) serves as cofactor.

It catalyses the reaction Endonucleolytic cleavage of RNA, removing extra 3' nucleotides from tRNA precursor, generating 3' termini of tRNAs. A 3'-hydroxy group is left at the tRNA terminus and a 5'-phosphoryl group is left at the trailer molecule.. Its function is as follows. Zinc phosphodiesterase, which displays some tRNA 3'-processing endonuclease activity. Probably involved in tRNA maturation, by removing a 3'-trailer from precursor tRNA. The sequence is that of Ribonuclease Z from Oenococcus oeni (strain ATCC BAA-331 / PSU-1).